The sequence spans 229 residues: Adenylate kinase (229 aa).

A propeptide spanning residues 1–9 (MLSTLAKRF) is cleaved from the precursor. 25 to 30 (GVGKGT) serves as a coordination point for ATP. The interval 45 to 74 (STGDALRAEIRGQTPLGKRVKGIIESGGLV) is NMP. AMP contacts are provided by residues T46, R51, 72 to 74 (GLV), 100 to 103 (GIPR), and Q107. Residues 141-178 (GRLFHPGSGRVYHKVTNPPKKPMTDDITGEPLIIRKDD) are LID. R142 provides a ligand contact to ATP. AMP contacts are provided by R175 and R186. G214 is an ATP binding site.

Belongs to the adenylate kinase family.

The protein localises to the hydrogenosome. The enzyme catalyses AMP + ATP = 2 ADP. Functionally, catalyzes the reversible transfer of the terminal phosphate group between ATP and AMP. Plays an important role in cellular energy homeostasis and in adenine nucleotide metabolism. In Trichomonas vaginalis, this protein is Adenylate kinase.